The primary structure comprises 103 residues: UPF0132 membrane protein AF_0105 (103 aa).

Helical transmembrane passes span 5 to 25 (VAGA…LLME), 35 to 55 (AMQS…LSFI), and 58 to 78 (IGVL…LVCI).

The protein belongs to the UPF0132 family.

It is found in the cell membrane. The sequence is that of UPF0132 membrane protein AF_0105 from Archaeoglobus fulgidus (strain ATCC 49558 / DSM 4304 / JCM 9628 / NBRC 100126 / VC-16).